The primary structure comprises 144 residues: Monooxygenase ptaG (144 aa).

It belongs to the avfA family.

The protein operates within secondary metabolite biosynthesis. Monooxygenase; part of the gene cluster that mediates the biosynthesis of pestheic acid, a diphenyl ether which is a biosynthetic precursor of the unique chloropupukeananes. The biosynthesis initiates from condensation of acetate and malonate units catalyzed by the non-reducing PKS ptaA. As the ptaA protein is TE/CLC domain-deficient, hydrolysis and Claisen cyclization of the polyketide could be catalyzed by ptaB containing a beta-lactamase domain. The ptaB protein might hydrolyze the thioester bond between the ACP of ptaA and the intermediate to release atrochrysone carboxylic acid, which is spontaneously dehydrated to form endocrocin anthrone. Endocrocin anthrone is then converted to endocrocin, catalyzed by the anthrone oxygenase ptaC. Spontaneous decarboxylation of endocrocin occurs to generate emodin. An O-methyltransferase (ptaH or ptaI) could methylate emodin to form physcion. PtaJ could then catalyze the oxidative cleavage of physcion, and rotation of the intermediate could then afford desmethylisosulochrin. PtaF, a putative NADH-dependent oxidoreductase, might also participate in the oxidative cleavage step. Desmethylisosulochrin is then transformed by another O-methyltransferase (ptaH or ptaI) to form isosulochrin. Chlorination of isosulochrin by ptaM in the cyclohexadienone B ring then produces chloroisosulochrin. PtaE is responsible for the oxidative coupling reactions of both benzophenones isosulochrin and chloroisosulochrin to RES-1214-1 and pestheic acid respectively, regardless of chlorination. The chain is Monooxygenase ptaG from Pestalotiopsis fici (strain W106-1 / CGMCC3.15140).